We begin with the raw amino-acid sequence, 61 residues long: Small ribosomal subunit protein uS14 (61 aa).

Residues Cys24, Cys27, Cys40, and Cys43 each contribute to the Zn(2+) site.

The protein belongs to the universal ribosomal protein uS14 family. Zinc-binding uS14 subfamily. In terms of assembly, part of the 30S ribosomal subunit. Contacts proteins S3 and S10. The cofactor is Zn(2+).

Binds 16S rRNA, required for the assembly of 30S particles and may also be responsible for determining the conformation of the 16S rRNA at the A site. The sequence is that of Small ribosomal subunit protein uS14 from Borreliella burgdorferi (strain ATCC 35210 / DSM 4680 / CIP 102532 / B31) (Borrelia burgdorferi).